A 219-amino-acid polypeptide reads, in one-letter code: Proteasome subunit beta type-9 (219 aa).

Positions 1–20 (MLRAGAPTAGSFRTKEVHTG) are cleaved as a propeptide — removed in mature form. Thr21 (nucleophile) is an active-site residue. N6-acetyllysine is present on residues Lys53 and Lys109.

It belongs to the peptidase T1B family. As to quaternary structure, the 26S proteasome consists of a 20S proteasome core and two 19S regulatory subunits. The 20S proteasome core is composed of 28 subunits that are arranged in four stacked rings, resulting in a barrel-shaped structure. The two end rings are each formed by seven alpha subunits, and the two central rings are each formed by seven beta subunits. The catalytic chamber with the active sites is on the inside of the barrel. Component of the immunoproteasome, where it displaces the equivalent housekeeping subunit PSMB6. Component of the spermatoproteasome, a form of the proteasome specifically found in testis. Post-translationally, autocleaved. The resulting N-terminal Thr residue of the mature subunit is responsible for the nucleophile proteolytic activity.

It localises to the cytoplasm. The protein resides in the nucleus. The catalysed reaction is Cleavage of peptide bonds with very broad specificity.. In terms of biological role, the proteasome is a multicatalytic proteinase complex which is characterized by its ability to cleave peptides with Arg, Phe, Tyr, Leu, and Glu adjacent to the leaving group at neutral or slightly basic pH. The proteasome has an ATP-dependent proteolytic activity. This subunit is involved in antigen processing to generate class I binding peptides. This is Proteasome subunit beta type-9 (Psmb9) from Mus platythrix (Flat-haired mouse).